The primary structure comprises 591 residues: DEAD-box ATP-dependent RNA helicase 30 (591 aa).

Residues 1–109 form a disordered region; it reads MSSYDRRFAD…GRGGSSKREL (109 aa). The span at 72-103 shows a compositional bias: gly residues; the sequence is FSVGRGGGRGGYGQYGDRNGGGNWGGGGGRGG. The Q motif signature appears at 165–193; that stretch reads KMFQDANFPDNILEAIAKLGFTEPTPIQA. Residues 196–371 form the Helicase ATP-binding domain; it reads WPMALKGRDL…RQFLRDPYKA (176 aa). 209-216 is a binding site for ATP; sequence AETGSGKT. The DEAD box motif lies at 319 to 322; the sequence is DEAD. The Helicase C-terminal domain occupies 399 to 544; the sequence is RLLTLLKQLM…VVPPTLSALV (146 aa). Residues 547-591 are disordered; sequence SGSGYGGSGGGRNFRPRGGGRGGGFGDKRSRSTSNFVPHGGKRTW. The segment covering 549–571 has biased composition (gly residues); it reads SGYGGSGGGRNFRPRGGGRGGGF.

It belongs to the DEAD box helicase family. DDX5/DBP2 subfamily.

The protein localises to the nucleus. The enzyme catalyses ATP + H2O = ADP + phosphate + H(+). Functionally, ATP-dependent RNA helicase involved nonsense-mediated mRNA decay and ribosome biogenesis through rRNA processing. The sequence is that of DEAD-box ATP-dependent RNA helicase 30 (RH30) from Arabidopsis thaliana (Mouse-ear cress).